Reading from the N-terminus, the 571-residue chain is Mannan endo-1,4-beta-mannosidase B (571 aa).

The N-terminal stretch at 1–19 (MNSLSLLLFCIFFVFSTFA) is a signal peptide. In terms of domain architecture, CBM6 spans 22-141 (VYYEAENGKL…WMWVDAFVIN (120 aa)). Residues 165–459 (PAAKKLYDFL…FTHKTVMNMD (295 aa)) enclose the GH26 domain. Residue tryptophan 286 participates in substrate binding. Catalysis depends on glutamate 319, which acts as the Proton donor. Substrate contacts are provided by tryptophan 324 and tyrosine 379. Residue glutamate 407 is the Nucleophile of the active site. CBM10 domains follow at residues 491 to 527 (ECFS…CGIG) and 534 to 571 (VCWS…CGII).

This sequence belongs to the glycosyl hydrolase 26 family.

It catalyses the reaction Random hydrolysis of (1-&gt;4)-beta-D-mannosidic linkages in mannans, galactomannans and glucomannans.. The protein is Mannan endo-1,4-beta-mannosidase B (MANB) of Piromyces sp.